Reading from the N-terminus, the 800-residue chain is Integrin beta-5 (800 aa).

An N-terminal signal peptide occupies residues 1-24 (MPRAPALLFSCLLGLCALVPRLPG). Residues 25 to 722 (LNICTSGSAT…PECGTAPSAM (698 aa)) lie on the Extracellular side of the membrane. The region spanning 27–76 (ICTSGSATSCEECLLIHPKCAWCFKEDFGSLRSVTSRCDLKANLIRNGCG) is the PSI domain. 19 disulfides stabilise this stretch: Cys28–Cys46, Cys36–Cys463, Cys39–Cys64, Cys49–Cys75, Cys202–Cys211, Cys259–Cys300, Cys401–Cys413, Cys433–Cys461, Cys465–Cys484, Cys476–Cys487, Cys489–Cys498, Cys500–Cys530, Cys513–Cys528, Cys522–Cys533, Cys535–Cys548, Cys550–Cys571, Cys555–Cys569, Cys563–Cys574, and Cys576–Cys585. The VWFA domain occupies 136–378 (YPVDLYYLMD…QLIINAYNSI (243 aa)). Mg(2+) is bound by residues Ser147 and Ser149. Residues Ser149, Asp152, Asp153, and Asp184 each contribute to the Ca(2+) site. 4 residues coordinate Ca(2+): Asn242, Asp244, Pro246, and Glu247. Glu247 contacts Mg(2+). N-linked (GlcNAc...) asparagine glycosylation is present at Asn347. Gly362 is a Ca(2+) binding site. 4 consecutive I-EGF domains span residues 465–499 (CSAG…TRCE), 500–549 (CQEG…SFCE), 550–586 (CDNF…DNCN), and 587–626 (CSTD…ETCE). Residue Asn479 is glycosylated (N-linked (GlcNAc...) asparagine). Asn552 is a glycosylation site (N-linked (GlcNAc...) asparagine). Asn586 carries an N-linked (GlcNAc...) asparagine glycan. 9 cysteine pairs are disulfide-bonded: Cys587–Cys610, Cys594–Cys608, Cys602–Cys613, Cys615–Cys625, Cys628–Cys631, Cys635–Cys683, Cys641–Cys662, Cys644–Cys658, and Cys691–Cys715. Residues Asn655 and Asn706 are each glycosylated (N-linked (GlcNAc...) asparagine). The helical transmembrane segment at 723–743 (TILLAVVGSILLTGFALLVIW) threads the bilayer. Over 744-800 (KLLVTIHDRREFAKFQSERSRARYEMASNPLYRKPISTHTVDFTFNKFNKSYNGTVD) the chain is Cytoplasmic. A Phosphoserine modification is found at Ser771.

Belongs to the integrin beta chain family. Heterodimer of an alpha and a beta subunit. Beta-5 (ITGB5) associates with alpha-V (ITGAV). Interacts with MYO10. Interacts with DAB2. Integrin ITGAV:ITGB5 interacts with FBLN5 (via N-terminus). ITGAV:ITGB5 interacts with CCN3. Interacts with tensin TNS3; TNS3 also interacts with PEAK1, thus acting as an adapter molecule to bridge the association of PEAK1 with ITGB5.

The protein resides in the cell membrane. In terms of biological role, integrin alpha-V/beta-5 (ITGAV:ITGB5) is a receptor for fibronectin. It recognizes the sequence R-G-D in its ligand. This Bos taurus (Bovine) protein is Integrin beta-5 (ITGB5).